The following is a 302-amino-acid chain: Nitrophorin Cim l NP (302 aa).

Residues 1-20 form the signal peptide; the sequence is MKLLLSAGAALAFVLGLCAA. C80 serves as a coordination point for heme.

Heme b serves as cofactor. In terms of processing, the N-terminus is blocked. Expressed in salivary glands.

The protein localises to the secreted. Its function is as follows. Heme-based protein that delivers nitric oxide gas (NO) to the victim while feeding, resulting in vasodilation. In place of heme, the heme-binding cysteine can also reversibly bind NO when it is present in high concentrations. This chain is Nitrophorin Cim l NP, found in Cimex lectularius (Bed bug).